We begin with the raw amino-acid sequence, 143 residues long: Small ribosomal subunit protein bS6 (143 aa).

The interval 100-143 is disordered; sequence SPIIKMKDERREVVELTTSGSEDNQKDHHKEDLDKKTDEFSEEN. 2 stretches are compositionally biased toward basic and acidic residues: residues 104–113 and 122–143; these read KMKDERREVV and DNQK…SEEN.

The protein belongs to the bacterial ribosomal protein bS6 family.

In terms of biological role, binds together with bS18 to 16S ribosomal RNA. The sequence is that of Small ribosomal subunit protein bS6 from Hamiltonella defensa subsp. Acyrthosiphon pisum (strain 5AT).